Consider the following 451-residue polypeptide: IMP-specific 5'-nucleotidase 1 (451 aa).

Residue D153 is the Nucleophile of the active site. IMP contacts are provided by D153, D155, D161, T189, D377, and K385. Positions 153 and 155 each coordinate Mg(2+). Catalysis depends on D155, which acts as the Proton donor. Mg(2+) is bound at residue D409.

The protein belongs to the ISN1 family. Homotetramer. Mg(2+) serves as cofactor.

It carries out the reaction IMP + H2O = inosine + phosphate. Its activity is regulated as follows. Allosterically activated by ATP. ATP binding is a prerequisite to magnesium and substrate binding. ATP binds to 2 of the subunits in the homotetramer inducing a closure of these 2 subunits and the release of the C-terminal loop, thereby activating the enzyme. Functionally, IMP-specific 5'-nucleotidase involved in IMP (inositol monophosphate) degradation. The polypeptide is IMP-specific 5'-nucleotidase 1 (isn1) (Emericella nidulans (strain FGSC A4 / ATCC 38163 / CBS 112.46 / NRRL 194 / M139) (Aspergillus nidulans)).